The chain runs to 633 residues: Probable potassium transport system protein Kup 3 (633 aa).

The next 12 helical transmembrane spans lie at 24-44 (LVLA…LYAF), 61-81 (VLGI…LKYV), 114-134 (LVLG…TPAI), 148-168 (PALS…LFFV), 180-200 (FGPV…IHIF), 222-242 (IGSA…AEAL), 258-278 (WFSL…AFVL), 298-318 (IPMV…VISG), 348-368 (IFMP…VLFF), 377-397 (AYGI…FIVM), 405-425 (LTAA…FLAA), and 427-447 (IAKF…MALI).

The protein belongs to the HAK/KUP transporter (TC 2.A.72) family.

It localises to the cell inner membrane. It carries out the reaction K(+)(in) + H(+)(in) = K(+)(out) + H(+)(out). Transport of potassium into the cell. Likely operates as a K(+):H(+) symporter. The sequence is that of Probable potassium transport system protein Kup 3 from Rhizobium johnstonii (strain DSM 114642 / LMG 32736 / 3841) (Rhizobium leguminosarum bv. viciae).